The chain runs to 694 residues: Acetyl-coenzyme A synthetase (694 aa).

The tract at residues 1–23 (MSDKRPRSPCSNNNDELNDSSVL) is disordered. Positions 9 to 23 (PCSNNNDELNDSSVL) are enriched in polar residues. CoA contacts are provided by residues 229 to 232 (RGKK) and T347. ATP contacts are provided by residues 423-425 (GEP), 447-452 (DTYWQT), D536, and R551. A CoA-binding site is contributed by S559. R562 lines the ATP pocket. Residue R628 coordinates CoA.

The protein belongs to the ATP-dependent AMP-binding enzyme family.

The enzyme catalyses acetate + ATP + CoA = acetyl-CoA + AMP + diphosphate. This is Acetyl-coenzyme A synthetase (ACS) from Cryptosporidium parvum.